The sequence spans 585 residues: Serine/threonine-protein kinase PknI (585 aa).

Topologically, residues 1–349 (MALASGVTFA…ASPTRRRPRR (349 aa)) are cytoplasmic. The region spanning 12–252 (YTVVRMLGCS…SCREFADAMN (241 aa)) is the Protein kinase domain. ATP-binding positions include 18–26 (LGCSAMGEV) and Lys-41. ADP-binding residues include Lys-41, Asp-90, and Val-92. Asp-137 functions as the Proton acceptor in the catalytic mechanism. A helical transmembrane segment spans residues 350-370 (ILVGAVAVLLLAGLFAVGIVI). The Extracellular portion of the chain corresponds to 371 to 585 (GRKTNTTATE…PTTTAPGPGR (215 aa)). Residues 546–585 (SGDLPPAVTVPDPATIPDTPDTTSTATLTPPTTTAPGPGR) form a disordered region. Over residues 554–585 (TVPDPATIPDTPDTTSTATLTPPTTTAPGPGR) the composition is skewed to low complexity.

The protein belongs to the protein kinase superfamily. Ser/Thr protein kinase family. The cofactor is Mn(2+). Autophosphorylated at serine and threonine residues.

The protein localises to the cytoplasm. It localises to the cell membrane. It carries out the reaction L-seryl-[protein] + ATP = O-phospho-L-seryl-[protein] + ADP + H(+). The enzyme catalyses L-threonyl-[protein] + ATP = O-phospho-L-threonyl-[protein] + ADP + H(+). Functionally, plays an important role in slowing down the growth of mycobacteria within the infected host. This chain is Serine/threonine-protein kinase PknI (pknI), found in Mycobacterium bovis (strain ATCC BAA-935 / AF2122/97).